Here is a 655-residue protein sequence, read N- to C-terminus: tRNA uridine 5-carboxymethylaminomethyl modification enzyme MnmG (655 aa).

FAD is bound at residue 13–18 (GGGHAG). 281 to 295 (GPRYCPSVEDKINRF) is an NAD(+) binding site.

It belongs to the MnmG family. As to quaternary structure, homodimer. Heterotetramer of two MnmE and two MnmG subunits. FAD is required as a cofactor.

The protein localises to the cytoplasm. Functionally, NAD-binding protein involved in the addition of a carboxymethylaminomethyl (cmnm) group at the wobble position (U34) of certain tRNAs, forming tRNA-cmnm(5)s(2)U34. This chain is tRNA uridine 5-carboxymethylaminomethyl modification enzyme MnmG, found in Paracidovorax citrulli (strain AAC00-1) (Acidovorax citrulli).